We begin with the raw amino-acid sequence, 157 residues long: 6,7-dimethyl-8-ribityllumazine synthase (157 aa).

5-amino-6-(D-ribitylamino)uracil is bound by residues Phe24, 56–58 (SFE), and 79–81 (VLI). Residue 84–85 (ET) participates in (2S)-2-hydroxy-3-oxobutyl phosphate binding. Residue His87 is the Proton donor of the active site. Phe112 is a 5-amino-6-(D-ribitylamino)uracil binding site. Arg126 contacts (2S)-2-hydroxy-3-oxobutyl phosphate.

The protein belongs to the DMRL synthase family.

It catalyses the reaction (2S)-2-hydroxy-3-oxobutyl phosphate + 5-amino-6-(D-ribitylamino)uracil = 6,7-dimethyl-8-(1-D-ribityl)lumazine + phosphate + 2 H2O + H(+). Its pathway is cofactor biosynthesis; riboflavin biosynthesis; riboflavin from 2-hydroxy-3-oxobutyl phosphate and 5-amino-6-(D-ribitylamino)uracil: step 1/2. Functionally, catalyzes the formation of 6,7-dimethyl-8-ribityllumazine by condensation of 5-amino-6-(D-ribitylamino)uracil with 3,4-dihydroxy-2-butanone 4-phosphate. This is the penultimate step in the biosynthesis of riboflavin. The sequence is that of 6,7-dimethyl-8-ribityllumazine synthase from Pyrococcus furiosus (strain ATCC 43587 / DSM 3638 / JCM 8422 / Vc1).